The following is a 1067-amino-acid chain: Probable importin-5 homolog (1067 aa).

HEAT repeat units lie at residues 3 to 34 (LQPITDLLKALNSGNTTTIQQAEQLYADYKNH), 42 to 75 (SFIVLIRTSQDELLRSYPPVLLRTLVNGNDSGNI), 93 to 120 (FAVREEPKNHIRHSILNVIAILAIQLVP), 125 to 152 (PEILSFIIESSSSPEENLRESSFYLIGA), 164 to 197 (APHFDKFALLVEKGLNDPSAKVQVSALETVSTFI), 206 to 243 (VFKPLIPAMLNTIQKTIESNLEKEAQKGILTFIIIAQY), 251 to 286 (NFDMIFKVFFQFLEHQSLEDETKHACLHFFLTFAEF), 295 to 347 (LYLE…HCVS), 349 to 381 (GLWEFFLQCAPTLLNSGNWKERYTGLMTLSSIS), 385 to 425 (EKQI…ASYL), 427 to 466 (REMQDLYKTLIPVSLEHLNDPFPRVTISNCEFLTLFLDEI), 468 to 508 (PNRV…VDGI), 510 to 553 (EEFT…GLAV), 555 to 596 (KKVF…AQCL), 598 to 658 (EDFI…AMEL), 661 to 703 (HLFP…SKQH), 718 to 757 (FTSRLFLDSYERMAASIKTESEPDTLSAKLKALSDLMDIG), 763 to 826 (ADRI…CIQF), 832 to 869 (PYIATVLPAMIELIETAPSVEIKTSMICILDDLIENGG), 876 to 909 (YPHIIKPMMNCTLPNLDPSLIQSAVFGIGLAAEN), 917 to 960 (FLME…ITNL), 969 to 999 (PQTIALWLSYLPIQDDGEAGSIIKSLCTLIR), 1008 to 1040 (QQYIVKVLEIIAVGLHKKAVNPDDKQIISLALR), and 1041 to 1064 (SQESLVAQSLFQLSAENQAILANF).

It belongs to the importin beta family. Importin beta-3 subfamily.

It localises to the cytoplasm. It is found in the nucleus. Functionally, functions in nuclear protein import as nuclear transport receptor. Serves as receptor for nuclear localization signals (NLS) in cargo substrates. This chain is Probable importin-5 homolog, found in Dictyostelium discoideum (Social amoeba).